The sequence spans 513 residues: Lysine--tRNA ligase (513 aa).

Residues Glu-422 and Glu-429 each contribute to the Mg(2+) site.

Belongs to the class-II aminoacyl-tRNA synthetase family. In terms of assembly, homodimer. Mg(2+) serves as cofactor.

The protein resides in the cytoplasm. The enzyme catalyses tRNA(Lys) + L-lysine + ATP = L-lysyl-tRNA(Lys) + AMP + diphosphate. The protein is Lysine--tRNA ligase of Tolumonas auensis (strain DSM 9187 / NBRC 110442 / TA 4).